The chain runs to 629 residues: tRNA uridine 5-carboxymethylaminomethyl modification enzyme MnmG (629 aa).

Residues 13-18 (GGGHAG), V125, and S180 contribute to the FAD site. 273-287 (GPRYCPSIEDKVMRF) serves as a coordination point for NAD(+). Q370 is a binding site for FAD.

Belongs to the MnmG family. In terms of assembly, homodimer. Heterotetramer of two MnmE and two MnmG subunits. FAD is required as a cofactor.

The protein localises to the cytoplasm. Functionally, NAD-binding protein involved in the addition of a carboxymethylaminomethyl (cmnm) group at the wobble position (U34) of certain tRNAs, forming tRNA-cmnm(5)s(2)U34. This is tRNA uridine 5-carboxymethylaminomethyl modification enzyme MnmG from Sodalis glossinidius (strain morsitans).